A 342-amino-acid chain; its full sequence is Cytoplasmic tRNA 2-thiolation protein 1 (342 aa).

Belongs to the TtcA family. CTU1/NCS6/ATPBD3 subfamily.

The protein resides in the cytoplasm. Its pathway is tRNA modification; 5-methoxycarbonylmethyl-2-thiouridine-tRNA biosynthesis. Functionally, plays a central role in 2-thiolation of mcm(5)S(2)U at tRNA wobble positions of tRNA(Lys), tRNA(Glu) and tRNA(Gln). Directly binds tRNAs and probably acts by catalyzing adenylation of tRNAs, an intermediate required for 2-thiolation. It is unclear whether it acts as a sulfurtransferase that transfers sulfur from thiocarboxylated URM1 onto the uridine of tRNAs at wobble position. The chain is Cytoplasmic tRNA 2-thiolation protein 1 from Anopheles gambiae (African malaria mosquito).